A 132-amino-acid chain; its full sequence is Agouti-signaling protein (132 aa).

Residues 1–22 (MDVTRLVLATLLVFLCFFAAYS) form the signal peptide. An N-linked (GlcNAc...) asparagine glycan is attached at Asn-39. The segment at 60–93 (KKISRKEAEKRRSSKKEASKQKVARPRTPLSVPC) is disordered. Over residues 64 to 79 (RKEAEKRRSSKKEASK) the composition is skewed to basic and acidic residues. Intrachain disulfides connect Cys-93-Cys-108, Cys-100-Cys-114, Cys-107-Cys-125, Cys-111-Cys-132, and Cys-116-Cys-123. The Agouti domain maps to 93–132 (CVSTRGSCKPPAPACCHPCASCQCRFFRSACSCRVLNVNC).

It localises to the secreted. Its function is as follows. Involved in the regulation of melanogenesis. The binding of ASP to MC1R precludes alpha-MSH initiated signaling and thus blocks production of cAMP, leading to a down-regulation of eumelanogenesis (brown/black pigment) and thus increasing synthesis of pheomelanin (yellow/red pigment). The protein is Agouti-signaling protein (ASIP) of Cebuella pygmaea (Pygmy marmoset).